A 69-amino-acid chain; its full sequence is MEQKTLQVEGMSCQHCVKAVETSVGELDGVSAVHVNLEAGKVDVSFDADKVSVKDIADAIEDQGYDVAK.

Residues 2 to 68 (EQKTLQVEGM…AIEDQGYDVA (67 aa)) enclose the HMA domain. 2 residues coordinate Cu cation: Cys13 and Cys16.

In terms of assembly, monomer in the absence of copper. Homodimer in the presence of copper ions. Forms a heterodimer (electrostatic interactions) with CopA during the transfer of Cu(+).

Its subcellular location is the cytoplasm. Chaperone that serves for the intracellular sequestration and transport of Cu(+). Delivers Cu(+) to the copper-transporting ATPase CopA. Functions in E.coli to transfer Cu(+) to CopA missing its first metal-binding domain. The chain is Copper chaperone CopZ (copZ) from Bacillus subtilis (strain 168).